We begin with the raw amino-acid sequence, 213 residues long: Na(+)-translocating NADH-quinone reductase subunit D (213 aa).

Helical transmembrane passes span 21 to 41, 42 to 62, 77 to 97, 101 to 121, 131 to 151, and 183 to 203; these read PLIAILGICSALAVTTTVKTA, ITMGLAVSFVTGCSSFFVSLL, IIISLFVIVIDQFLKAFFFNI, LSVFVGLIITNCIVMGRAESL, FLDGLASGLGYGWVLVFVSII, and FGLMVLAPSAFFLLGIMIWVV.

Belongs to the NqrDE/RnfAE family. In terms of assembly, composed of six subunits; NqrA, NqrB, NqrC, NqrD, NqrE and NqrF.

It is found in the cell inner membrane. The enzyme catalyses a ubiquinone + n Na(+)(in) + NADH + H(+) = a ubiquinol + n Na(+)(out) + NAD(+). NQR complex catalyzes the reduction of ubiquinone-1 to ubiquinol by two successive reactions, coupled with the transport of Na(+) ions from the cytoplasm to the periplasm. NqrA to NqrE are probably involved in the second step, the conversion of ubisemiquinone to ubiquinol. The chain is Na(+)-translocating NADH-quinone reductase subunit D from Chlamydia felis (strain Fe/C-56) (Chlamydophila felis).